Here is a 102-residue protein sequence, read N- to C-terminus: Protein translation factor SUI1 homolog (102 aa).

This sequence belongs to the SUI1 family.

The chain is Protein translation factor SUI1 homolog from Methanococcus vannielii.